The primary structure comprises 931 residues: Glycine dehydrogenase (decarboxylating) (931 aa).

Lys-684 is subject to N6-(pyridoxal phosphate)lysine.

The protein belongs to the GcvP family. The glycine cleavage system is composed of four proteins: P, T, L and H. Pyridoxal 5'-phosphate serves as cofactor.

It carries out the reaction N(6)-[(R)-lipoyl]-L-lysyl-[glycine-cleavage complex H protein] + glycine + H(+) = N(6)-[(R)-S(8)-aminomethyldihydrolipoyl]-L-lysyl-[glycine-cleavage complex H protein] + CO2. In terms of biological role, the glycine cleavage system catalyzes the degradation of glycine. The P protein binds the alpha-amino group of glycine through its pyridoxal phosphate cofactor; CO(2) is released and the remaining methylamine moiety is then transferred to the lipoamide cofactor of the H protein. This is Glycine dehydrogenase (decarboxylating) from Bartonella henselae (strain ATCC 49882 / DSM 28221 / CCUG 30454 / Houston 1) (Rochalimaea henselae).